The primary structure comprises 146 residues: Allograft inflammatory factor 1 (146 aa).

At S1 the chain carries N-acetylserine. K10 is modified (N6-acetyllysine). Position 38 is a phosphoserine (S38). Residues 44-79 (RKLEAFKQKYMEFDLNGNGDIDIMSLKRMLEKLGVP) enclose the EF-hand 1 domain. D57, N59, N61, D63, and T99 together coordinate Ca(2+). The region spanning 81–115 (THLELKKLIKEVSSGSGETFSYSIFLKMMLGKRSA) is the EF-hand 2; degenerate domain. The disordered stretch occupies residues 127-146 (AREQEKPTGPPAKKAISELP).

In terms of assembly, homodimer (Potential). Monomer. Interacts with LCP1. In terms of tissue distribution, microglial cells in the central nervous system and dendritic cells and macrophages in several organs.

Its subcellular location is the cytoplasm. The protein resides in the cytoskeleton. It localises to the cell projection. The protein localises to the ruffle membrane. It is found in the phagocytic cup. Actin-binding protein that enhances membrane ruffling and RAC activation. Enhances the actin-bundling activity of LCP1. Binds calcium. Plays a role in RAC signaling and in phagocytosis. May play a role in macrophage activation and function. Promotes the proliferation of vascular smooth muscle cells and of T-lymphocytes. Enhances lymphocyte migration. Plays a role in vascular inflammation. Has a dual influence on glucose-induced insulin secretion: inhibition at low concentration and stimulation at high concentrations. The protein is Allograft inflammatory factor 1 (AIF1) of Sus scrofa (Pig).